A 29-amino-acid chain; its full sequence is Lambda-theraphotoxin-Ec2b (29 aa).

3 disulfide bridges follow: Cys2/Cys16, Cys9/Cys21, and Cys15/Cys25.

This sequence belongs to the neurotoxin 30 (phrixotoxin) family. As to expression, expressed by the venom gland.

The protein resides in the secreted. Insect-selective neurotoxin that potently blocks insect calcium-activated potassium (BKCa) channels (Slo-type) in cockroach dorsal unpaired median (DUM) neurons (IC(50)=25.3 nM). This occurs in the absence of any shifts in the voltage dependence of activation. May interact with the turret and/or loop region of the external entrance to the channel and does not project deeply into the pore of the channel. In vivo, does not show toxicity in mice after intracerebroventricular injection of up to 25 pmol/g (1.8 ug/20 g mouse). This Eucratoscelus constrictus (African red-rump baboon spider) protein is Lambda-theraphotoxin-Ec2b.